Reading from the N-terminus, the 341-residue chain is Ketol-acid reductoisomerase (NADP(+)) (341 aa).

Residues 2-181 form the KARI N-terminal Rossmann domain; that stretch reads AKVYYNGDAN…GATRAGVLET (180 aa). Residues 25–28, Arg-48, Ser-52, and 82–85 each bind NADP(+); these read YGSQ and DEKQ. His-107 is a catalytic residue. Gly-133 contacts NADP(+). The 146-residue stretch at 182–327 folds into the KARI C-terminal knotted domain; it reads TFKEETETDL…RELRSMMPFV (146 aa). Mg(2+) is bound by residues Asp-190, Glu-194, Glu-226, and Glu-230. A substrate-binding site is contributed by Ser-251.

Belongs to the ketol-acid reductoisomerase family. Mg(2+) serves as cofactor.

The enzyme catalyses (2R)-2,3-dihydroxy-3-methylbutanoate + NADP(+) = (2S)-2-acetolactate + NADPH + H(+). It carries out the reaction (2R,3R)-2,3-dihydroxy-3-methylpentanoate + NADP(+) = (S)-2-ethyl-2-hydroxy-3-oxobutanoate + NADPH + H(+). It functions in the pathway amino-acid biosynthesis; L-isoleucine biosynthesis; L-isoleucine from 2-oxobutanoate: step 2/4. It participates in amino-acid biosynthesis; L-valine biosynthesis; L-valine from pyruvate: step 2/4. Involved in the biosynthesis of branched-chain amino acids (BCAA). Catalyzes an alkyl-migration followed by a ketol-acid reduction of (S)-2-acetolactate (S2AL) to yield (R)-2,3-dihydroxy-isovalerate. In the isomerase reaction, S2AL is rearranged via a Mg-dependent methyl migration to produce 3-hydroxy-3-methyl-2-ketobutyrate (HMKB). In the reductase reaction, this 2-ketoacid undergoes a metal-dependent reduction by NADPH to yield (R)-2,3-dihydroxy-isovalerate. The chain is Ketol-acid reductoisomerase (NADP(+)) from Geobacillus sp. (strain WCH70).